The sequence spans 98 residues: ESAT-6-like protein EsxK (98 aa).

Belongs to the WXG100 family. CFP-10 subfamily. Strongly interacts with EsxL to form a heterodimeric complex under reducing conditions. The complex is regulated by the redox state of EsxL.

It is found in the secreted. The sequence is that of ESAT-6-like protein EsxK from Mycobacterium tuberculosis (strain ATCC 25618 / H37Rv).